Here is a 117-residue protein sequence, read N- to C-terminus: MDCTWRILFLVAAATGTHAQVQLVQSGAEVKKPGASVKVSCKVSGYTLTELSMHWVRQAPGKGLEWMGGFDPEDGETIYAQKFQGRVTMTEDTSTDTAYMELSSLRSEDTAVYYCAT.

The N-terminal stretch at 1–19 (MDCTWRILFLVAAATGTHA) is a signal peptide. Positions 20 to 44 (QVQLVQSGAEVKKPGASVKVSCKVS) are framework-1. In terms of domain architecture, Ig-like spans 20–117 (QVQLVQSGAE…EDTAVYYCAT (98 aa)). A disulfide bridge links Cys41 with Cys115. A complementarity-determining-1 region spans residues 45-52 (GYTLTELS). The tract at residues 53–69 (MHWVRQAPGKGLEWMGG) is framework-2. The interval 70–77 (FDPEDGET) is complementarity-determining-2. The framework-3 stretch occupies residues 78 to 115 (IYAQKFQGRVTMTEDTSTDTAYMELSSLRSEDTAVYYC). A complementarity-determining-3 region spans residues 116 to 117 (AT).

In terms of assembly, immunoglobulins are composed of two identical heavy chains and two identical light chains; disulfide-linked.

The protein resides in the secreted. The protein localises to the cell membrane. Its function is as follows. V region of the variable domain of immunoglobulin heavy chains that participates in the antigen recognition. Immunoglobulins, also known as antibodies, are membrane-bound or secreted glycoproteins produced by B lymphocytes. In the recognition phase of humoral immunity, the membrane-bound immunoglobulins serve as receptors which, upon binding of a specific antigen, trigger the clonal expansion and differentiation of B lymphocytes into immunoglobulins-secreting plasma cells. Secreted immunoglobulins mediate the effector phase of humoral immunity, which results in the elimination of bound antigens. The antigen binding site is formed by the variable domain of one heavy chain, together with that of its associated light chain. Thus, each immunoglobulin has two antigen binding sites with remarkable affinity for a particular antigen. The variable domains are assembled by a process called V-(D)-J rearrangement and can then be subjected to somatic hypermutations which, after exposure to antigen and selection, allow affinity maturation for a particular antigen. This is Immunoglobulin heavy variable 1-24 from Homo sapiens (Human).